A 485-amino-acid polypeptide reads, in one-letter code: Adenosylhomocysteinase (485 aa).

Substrate is bound by residues threonine 64, aspartate 139, and glutamate 205. 206 to 208 (TTT) contacts NAD(+). 2 residues coordinate substrate: lysine 235 and aspartate 239. NAD(+)-binding positions include asparagine 240, 269–274 (GYGDVG), glutamate 292, asparagine 327, 348–350 (IGH), and asparagine 397.

Belongs to the adenosylhomocysteinase family. In terms of assembly, homotetramer. It depends on NAD(+) as a cofactor. As to expression, mainly in floral buds and stems.

The enzyme catalyses S-adenosyl-L-homocysteine + H2O = L-homocysteine + adenosine. Its pathway is amino-acid biosynthesis; L-homocysteine biosynthesis; L-homocysteine from S-adenosyl-L-homocysteine: step 1/1. Adenosylhomocysteine is a competitive inhibitor of S-adenosyl-L-methionine-dependent methyl transferase reactions; therefore adenosylhomocysteinase may play a key role in the control of methylations via regulation of the intracellular concentration of adenosylhomocysteine. This Petroselinum crispum (Parsley) protein is Adenosylhomocysteinase (SAHH).